Here is a 238-residue protein sequence, read N- to C-terminus: Accessory gene regulator A (238 aa).

Positions 2–125 (KIFICEDDPK…LRTRIIDCLE (124 aa)) constitute a Response regulatory domain. Position 59 is a 4-aspartylphosphate (Asp-59). One can recognise an HTH LytTR-type domain in the interval 143–238 (IELKRGSNSV…YASVRNVKKI (96 aa)).

Its subcellular location is the cytoplasm. Its function is as follows. Required for high-level post-exponential phase expression of a series of secreted proteins. The sequence is that of Accessory gene regulator A (agrA) from Staphylococcus aureus (strain COL).